We begin with the raw amino-acid sequence, 355 residues long: Putative beta-lactamase HcpE (355 aa).

Residues 1–22 (MGVKFLKILVCGLFFWSLNAHL) form the signal peptide. TPR repeat units lie at residues 27–60 (DNSFLGVAEKAYKSGNYSKATSYFKKACNDGVSE), 63–96 (TQLGIIYENGQGTRIDYKKALEYYKTACQADDRE), 98–131 (CFGLGGLYDEGLGTTQNYQEAIDAYAKACVLKHP), 132–166 (ESCYNLGIIYDRKIKGNADQAVTYYQKSCNFDMAK), 202–240 (GQACRALGSLFENGDAGLDEDFEVAFDYLQKACGLNNSG), 245–275 (LGSMYMLGRYVKKDPQKAFNFFKQACDMGSA), 276–311 (VSCSRMGFMYSQGDAVPKDLRKALDNYERGCDMGDE), and 312–344 (VGCFALAGMYYNMKDKENAIMIYDKGCKLGMKQ). Disulfide bonds link Cys-54–Cys-62, Cys-90–Cys-98, Cys-126–Cys-134, Cys-160–Cys-168, Cys-197–Cys-205, Cys-234–Cys-242, Cys-270–Cys-278, Cys-306–Cys-314, and Cys-338–Cys-346.

The protein belongs to the hcp beta-lactamase family.

It localises to the secreted. The enzyme catalyses a beta-lactam + H2O = a substituted beta-amino acid. May hydrolyze 6-aminopenicillinic acid and 7-aminocephalosporanic acid (ACA) derivatives. The chain is Putative beta-lactamase HcpE (hcpE) from Helicobacter pylori (strain ATCC 700392 / 26695) (Campylobacter pylori).